A 309-amino-acid chain; its full sequence is Small ribosomal subunit protein mS23 (309 aa).

It belongs to the mitochondrion-specific ribosomal protein mS23 family. In terms of assembly, component of the mitochondrial small ribosomal subunit.

The protein resides in the mitochondrion. This is Small ribosomal subunit protein mS23 (RSM25) from Lodderomyces elongisporus (strain ATCC 11503 / CBS 2605 / JCM 1781 / NBRC 1676 / NRRL YB-4239) (Yeast).